The following is a 122-amino-acid chain: Large ribosomal subunit protein bL12 (122 aa).

Positions 94 to 122 are disordered; the sequence is GNVKEGLSKEDAEEMKEKLEEAGATVELK. Residues 99-114 show a composition bias toward basic and acidic residues; the sequence is GLSKEDAEEMKEKLEE.

Belongs to the bacterial ribosomal protein bL12 family. Homodimer. Part of the ribosomal stalk of the 50S ribosomal subunit. Forms a multimeric L10(L12)X complex, where L10 forms an elongated spine to which 2 to 4 L12 dimers bind in a sequential fashion. Binds GTP-bound translation factors.

In terms of biological role, forms part of the ribosomal stalk which helps the ribosome interact with GTP-bound translation factors. Is thus essential for accurate translation. The protein is Large ribosomal subunit protein bL12 of Halanaerobium praevalens.